We begin with the raw amino-acid sequence, 290 residues long: 4-hydroxybenzoate octaprenyltransferase (290 aa).

The next 8 helical transmembrane spans lie at 23–43, 46–66, 99–119, 141–161, 163–183, 213–233, 234–254, and 268–288; these read IGAL…TPGV, LWIM…GCVV, LFVV…TMTI, LPQV…FAAV, ESVP…AVAY, LIIG…GELN, GLGW…VYQQ, and AFMN…MSYW.

The protein belongs to the UbiA prenyltransferase family. Mg(2+) serves as cofactor.

The protein localises to the cell inner membrane. The catalysed reaction is all-trans-octaprenyl diphosphate + 4-hydroxybenzoate = 4-hydroxy-3-(all-trans-octaprenyl)benzoate + diphosphate. Its pathway is cofactor biosynthesis; ubiquinone biosynthesis. In terms of biological role, catalyzes the prenylation of para-hydroxybenzoate (PHB) with an all-trans polyprenyl group. Mediates the second step in the final reaction sequence of ubiquinone-8 (UQ-8) biosynthesis, which is the condensation of the polyisoprenoid side chain with PHB, generating the first membrane-bound Q intermediate 3-octaprenyl-4-hydroxybenzoate. The polypeptide is 4-hydroxybenzoate octaprenyltransferase (Shigella flexneri).